We begin with the raw amino-acid sequence, 251 residues long: DNA repair protein RecO (251 aa).

The protein belongs to the RecO family.

Involved in DNA repair and RecF pathway recombination. This Nitratidesulfovibrio vulgaris (strain ATCC 29579 / DSM 644 / CCUG 34227 / NCIMB 8303 / VKM B-1760 / Hildenborough) (Desulfovibrio vulgaris) protein is DNA repair protein RecO.